Consider the following 613-residue polypeptide: Dihydroxy-acid dehydratase (613 aa).

Residue Asp-81 participates in Mg(2+) binding. Residue Cys-122 coordinates [2Fe-2S] cluster. Mg(2+) is bound by residues Asp-123 and Lys-124. Lys-124 bears the N6-carboxylysine mark. Cys-193 lines the [2Fe-2S] cluster pocket. Glu-489 lines the Mg(2+) pocket. Ser-515 (proton acceptor) is an active-site residue.

It belongs to the IlvD/Edd family. As to quaternary structure, homodimer. It depends on [2Fe-2S] cluster as a cofactor. Mg(2+) is required as a cofactor.

The enzyme catalyses (2R)-2,3-dihydroxy-3-methylbutanoate = 3-methyl-2-oxobutanoate + H2O. It catalyses the reaction (2R,3R)-2,3-dihydroxy-3-methylpentanoate = (S)-3-methyl-2-oxopentanoate + H2O. The protein operates within amino-acid biosynthesis; L-isoleucine biosynthesis; L-isoleucine from 2-oxobutanoate: step 3/4. Its pathway is amino-acid biosynthesis; L-valine biosynthesis; L-valine from pyruvate: step 3/4. Functions in the biosynthesis of branched-chain amino acids. Catalyzes the dehydration of (2R,3R)-2,3-dihydroxy-3-methylpentanoate (2,3-dihydroxy-3-methylvalerate) into 2-oxo-3-methylpentanoate (2-oxo-3-methylvalerate) and of (2R)-2,3-dihydroxy-3-methylbutanoate (2,3-dihydroxyisovalerate) into 2-oxo-3-methylbutanoate (2-oxoisovalerate), the penultimate precursor to L-isoleucine and L-valine, respectively. The chain is Dihydroxy-acid dehydratase from Pseudomonas fluorescens (strain Pf0-1).